The sequence spans 502 residues: Cyclin-dependent kinase 19 (502 aa).

N-acetylmethionine is present on M1. Residues E21 to F335 enclose the Protein kinase domain. Residues V27–V35 and K52 each bind ATP. Residue D151 is the Proton acceptor of the active site. Positions L359–Y502 are disordered. The segment covering N371 to P392 has biased composition (low complexity). A compositionally biased stretch (gly residues) spans T408 to A421. The span at Q424 to P435 shows a compositional bias: polar residues. S449 bears the Phosphoserine mark. Residues Y458–Y467 show a composition bias toward polar residues. Positions Q468–S496 are enriched in low complexity.

Belongs to the protein kinase superfamily. CMGC Ser/Thr protein kinase family. CDC2/CDKX subfamily.

It localises to the cytoplasm. Its subcellular location is the perinuclear region. It is found in the nucleus. It catalyses the reaction L-seryl-[protein] + ATP = O-phospho-L-seryl-[protein] + ADP + H(+). It carries out the reaction L-threonyl-[protein] + ATP = O-phospho-L-threonyl-[protein] + ADP + H(+). This Homo sapiens (Human) protein is Cyclin-dependent kinase 19 (CDK19).